A 180-amino-acid polypeptide reads, in one-letter code: ATP synthase subunit delta (180 aa).

This sequence belongs to the ATPase delta chain family. F-type ATPases have 2 components, F(1) - the catalytic core - and F(0) - the membrane proton channel. F(1) has five subunits: alpha(3), beta(3), gamma(1), delta(1), epsilon(1). F(0) has three main subunits: a(1), b(2) and c(10-14). The alpha and beta chains form an alternating ring which encloses part of the gamma chain. F(1) is attached to F(0) by a central stalk formed by the gamma and epsilon chains, while a peripheral stalk is formed by the delta and b chains.

Its subcellular location is the cell inner membrane. In terms of biological role, f(1)F(0) ATP synthase produces ATP from ADP in the presence of a proton or sodium gradient. F-type ATPases consist of two structural domains, F(1) containing the extramembraneous catalytic core and F(0) containing the membrane proton channel, linked together by a central stalk and a peripheral stalk. During catalysis, ATP synthesis in the catalytic domain of F(1) is coupled via a rotary mechanism of the central stalk subunits to proton translocation. Its function is as follows. This protein is part of the stalk that links CF(0) to CF(1). It either transmits conformational changes from CF(0) to CF(1) or is implicated in proton conduction. The chain is ATP synthase subunit delta from Citrifermentans bemidjiense (strain ATCC BAA-1014 / DSM 16622 / JCM 12645 / Bem) (Geobacter bemidjiensis).